We begin with the raw amino-acid sequence, 417 residues long: MFYKNDQIAGFDDSIWQAMEQEDKRQQDHVELIASENYTSARVMQAQGSQLTNKYAEGYPGKRYYGGCEHVDVIEQLAIDRAKELFGADYANVQPHSGSQANAAVFMALLKPGETVLGMSLAHGGHLTHGSKVSFSGKIYNAVQYGLNEATGEIDYEEVERLAKEHQPKMIIAGFSAYSRVVDWQRFRDIADSIGAWLFVDMAHVAGLVAAGLYPNPVPIADVVTTTTHKTLRGPRGGLILAKQNDELAKKLNSAVFPAGQGGPLMHVIAAKAICFKEALGEGYVEYQQQVIDNAREMAKTFQTRGYNVVSGGTDNHLFLLDLIDKGITGKDADAALGRANITVNKNSVPNDPQSPFVTSGLRIGTPAITSRGFGLEEAAALTGWICDVLDDISNEQVIDDVRSKVLDLCEKNPVYR.

(6S)-5,6,7,8-tetrahydrofolate is bound by residues Leu-121 and 125 to 127; that span reads GHL. Lys-230 is modified (N6-(pyridoxal phosphate)lysine). 355 to 357 is a binding site for (6S)-5,6,7,8-tetrahydrofolate; sequence SPF.

The protein belongs to the SHMT family. Homodimer. Requires pyridoxal 5'-phosphate as cofactor.

It is found in the cytoplasm. It catalyses the reaction (6R)-5,10-methylene-5,6,7,8-tetrahydrofolate + glycine + H2O = (6S)-5,6,7,8-tetrahydrofolate + L-serine. It functions in the pathway one-carbon metabolism; tetrahydrofolate interconversion. Its pathway is amino-acid biosynthesis; glycine biosynthesis; glycine from L-serine: step 1/1. Catalyzes the reversible interconversion of serine and glycine with tetrahydrofolate (THF) serving as the one-carbon carrier. This reaction serves as the major source of one-carbon groups required for the biosynthesis of purines, thymidylate, methionine, and other important biomolecules. Also exhibits THF-independent aldolase activity toward beta-hydroxyamino acids, producing glycine and aldehydes, via a retro-aldol mechanism. In Colwellia psychrerythraea (strain 34H / ATCC BAA-681) (Vibrio psychroerythus), this protein is Serine hydroxymethyltransferase 2.